A 262-amino-acid polypeptide reads, in one-letter code: Indole-3-glycerol phosphate synthase (262 aa).

It belongs to the TrpC family.

The catalysed reaction is 1-(2-carboxyphenylamino)-1-deoxy-D-ribulose 5-phosphate + H(+) = (1S,2R)-1-C-(indol-3-yl)glycerol 3-phosphate + CO2 + H2O. The protein operates within amino-acid biosynthesis; L-tryptophan biosynthesis; L-tryptophan from chorismate: step 4/5. This Bordetella petrii (strain ATCC BAA-461 / DSM 12804 / CCUG 43448) protein is Indole-3-glycerol phosphate synthase.